Consider the following 396-residue polypeptide: Glideosome-associated protein 50 (396 aa).

Residues M1 to R369 lie on the Lumenal side of the membrane. Residues H195 and H256 each contribute to the a metal cation site. A helical membrane pass occupies residues V370–F390. The Cytoplasmic segment spans residues L391 to K396.

The protein belongs to the metallophosphoesterase superfamily. Purple acid phosphatase family. As to quaternary structure, component of the glideosome complex composed of GAP50, GAP45, MTIP and MyoA; the complex is formed during the late schizont stage and in merozoites. MyoA, MTIP and GAP45 probably form an initial complex in the cytoplasm which is then recruited to the outer face of the inner membrane complex via the interaction with GAP50. Interacts with GAP45; the interaction is independent of GAP45 phosphorylation status and can also occur independently of the formation of the glideosome complex. Interacts with human factor H isoform CFH (via sushi 6-7 domains) and isoform FHL-1 (via sushi 6-7 domains); the interaction occurs in the vector mosquito midgut at the surface of activated gametocytes; the interaction protects the parasite from alternative complement pathway-mediated elimination. A metal cation is required as a cofactor. The N-terminus signal is likely to be cleaved.

It localises to the inner membrane complex. It is found in the cell membrane. The protein localises to the endoplasmic reticulum membrane. It catalyses the reaction a phosphate monoester + H2O = an alcohol + phosphate. With respect to regulation, activity is independent of metal ions. Its function is as follows. Component of the glideosome complex, an inner membrane complex structure involved in parasite gliding motility and host cell invasion. During the asexual blood stage, may play a role in the assembly and anchoring of the glideosome complex to the inner membrane complex. During the sexual stage in the vector mosquito midgut, protects gametocytes against host alternative complement pathway-mediated elimination by interacting with host complement inhibitor factor H. Has phosphatase activity towards nucleotides such as ATP, vitamins B1 and B6, phosphorylated sugars, glycerol phosphates and inositol triphosphates. However, the phosphatase activity is controversial. This Plasmodium falciparum (isolate 3D7) protein is Glideosome-associated protein 50.